The primary structure comprises 179 residues: Large ribosomal subunit protein uL5 (179 aa).

Belongs to the universal ribosomal protein uL5 family. As to quaternary structure, part of the 50S ribosomal subunit; part of the 5S rRNA/L5/L18/L25 subcomplex. Contacts the 5S rRNA and the P site tRNA. Forms a bridge to the 30S subunit in the 70S ribosome.

Its function is as follows. This is one of the proteins that bind and probably mediate the attachment of the 5S RNA into the large ribosomal subunit, where it forms part of the central protuberance. In the 70S ribosome it contacts protein S13 of the 30S subunit (bridge B1b), connecting the 2 subunits; this bridge is implicated in subunit movement. Contacts the P site tRNA; the 5S rRNA and some of its associated proteins might help stabilize positioning of ribosome-bound tRNAs. This Neisseria meningitidis serogroup A / serotype 4A (strain DSM 15465 / Z2491) protein is Large ribosomal subunit protein uL5.